A 158-amino-acid polypeptide reads, in one-letter code: 6,7-dimethyl-8-ribityllumazine synthase (158 aa).

5-amino-6-(D-ribitylamino)uracil-binding positions include F22, 57–59 (AVE), and 81–83 (AVI). 86–87 (GT) provides a ligand contact to (2S)-2-hydroxy-3-oxobutyl phosphate. Catalysis depends on H89, which acts as the Proton donor. F114 is a binding site for 5-amino-6-(D-ribitylamino)uracil. A (2S)-2-hydroxy-3-oxobutyl phosphate-binding site is contributed by R128.

It belongs to the DMRL synthase family. As to quaternary structure, forms an icosahedral capsid composed of 60 subunits, arranged as a dodecamer of pentamers.

It carries out the reaction (2S)-2-hydroxy-3-oxobutyl phosphate + 5-amino-6-(D-ribitylamino)uracil = 6,7-dimethyl-8-(1-D-ribityl)lumazine + phosphate + 2 H2O + H(+). It functions in the pathway cofactor biosynthesis; riboflavin biosynthesis; riboflavin from 2-hydroxy-3-oxobutyl phosphate and 5-amino-6-(D-ribitylamino)uracil: step 1/2. In terms of biological role, catalyzes the formation of 6,7-dimethyl-8-ribityllumazine by condensation of 5-amino-6-(D-ribitylamino)uracil with 3,4-dihydroxy-2-butanone 4-phosphate. This is the penultimate step in the biosynthesis of riboflavin. This is 6,7-dimethyl-8-ribityllumazine synthase from Shewanella piezotolerans (strain WP3 / JCM 13877).